We begin with the raw amino-acid sequence, 442 residues long: Adenylosuccinate synthetase (442 aa).

Residues 30 to 36 and 58 to 60 contribute to the GTP site; these read GDEGKGK and GHT. The active-site Proton acceptor is the Asp-31. Positions 31 and 58 each coordinate Mg(2+). IMP contacts are provided by residues 31–34, 56–59, Thr-148, Arg-162, Asn-241, Thr-256, and Arg-320; these read DEGK and NAGH. Residue His-59 is the Proton donor of the active site. 316–322 is a substrate binding site; sequence TTTGRRR. GTP is bound by residues Arg-322, 348 to 350, and 430 to 432; these read KLD and GVG.

Belongs to the adenylosuccinate synthetase family. As to quaternary structure, homodimer. Mg(2+) serves as cofactor.

Its subcellular location is the cytoplasm. It carries out the reaction IMP + L-aspartate + GTP = N(6)-(1,2-dicarboxyethyl)-AMP + GDP + phosphate + 2 H(+). It participates in purine metabolism; AMP biosynthesis via de novo pathway; AMP from IMP: step 1/2. In terms of biological role, plays an important role in the de novo pathway and in the salvage pathway of purine nucleotide biosynthesis. Catalyzes the first committed step in the biosynthesis of AMP from IMP. The chain is Adenylosuccinate synthetase from Trichoplax adhaerens (Trichoplax reptans).